Consider the following 644-residue polypeptide: Exoribonuclease 2 (644 aa).

The region spanning 189–516 is the RNB domain; the sequence is RRDLTALNFV…NHRLLKAIVK (328 aa). The S1 motif domain occupies 561–643; it reads DTRFAAEIID…ETRSIIARPV (83 aa).

This sequence belongs to the RNR ribonuclease family. RNase II subfamily.

Its subcellular location is the cytoplasm. It catalyses the reaction Exonucleolytic cleavage in the 3'- to 5'-direction to yield nucleoside 5'-phosphates.. Its function is as follows. Involved in mRNA degradation. Hydrolyzes single-stranded polyribonucleotides processively in the 3' to 5' direction. This Enterobacter sp. (strain 638) protein is Exoribonuclease 2.